The following is a 276-amino-acid chain: 2,3,4,5-tetrahydropyridine-2,6-dicarboxylate N-succinyltransferase (276 aa).

Residues Arg-104 and Asp-141 each contribute to the substrate site.

This sequence belongs to the transferase hexapeptide repeat family. In terms of assembly, homotrimer.

Its subcellular location is the cytoplasm. The catalysed reaction is (S)-2,3,4,5-tetrahydrodipicolinate + succinyl-CoA + H2O = (S)-2-succinylamino-6-oxoheptanedioate + CoA. It participates in amino-acid biosynthesis; L-lysine biosynthesis via DAP pathway; LL-2,6-diaminopimelate from (S)-tetrahydrodipicolinate (succinylase route): step 1/3. This is 2,3,4,5-tetrahydropyridine-2,6-dicarboxylate N-succinyltransferase from Legionella pneumophila (strain Paris).